Here is a 275-residue protein sequence, read N- to C-terminus: Formamidopyrimidine-DNA glycosylase (275 aa).

The active-site Schiff-base intermediate with DNA is Pro2. Catalysis depends on Glu3, which acts as the Proton donor. Catalysis depends on Lys58, which acts as the Proton donor; for beta-elimination activity. The DNA site is built by His92, Arg111, and Arg154. An FPG-type zinc finger spans residues 239-273; the sequence is HVYHRQGLPCQRCGTPIERIKVAQRGTHFCPHCQV. The Proton donor; for delta-elimination activity role is filled by Arg263.

Belongs to the FPG family. As to quaternary structure, monomer. Zn(2+) serves as cofactor.

It carries out the reaction Hydrolysis of DNA containing ring-opened 7-methylguanine residues, releasing 2,6-diamino-4-hydroxy-5-(N-methyl)formamidopyrimidine.. The catalysed reaction is 2'-deoxyribonucleotide-(2'-deoxyribose 5'-phosphate)-2'-deoxyribonucleotide-DNA = a 3'-end 2'-deoxyribonucleotide-(2,3-dehydro-2,3-deoxyribose 5'-phosphate)-DNA + a 5'-end 5'-phospho-2'-deoxyribonucleoside-DNA + H(+). In terms of biological role, involved in base excision repair of DNA damaged by oxidation or by mutagenic agents. Acts as a DNA glycosylase that recognizes and removes damaged bases. Has a preference for oxidized purines, such as 7,8-dihydro-8-oxoguanine (8-oxoG). Has AP (apurinic/apyrimidinic) lyase activity and introduces nicks in the DNA strand. Cleaves the DNA backbone by beta-delta elimination to generate a single-strand break at the site of the removed base with both 3'- and 5'-phosphates. The chain is Formamidopyrimidine-DNA glycosylase from Pediococcus pentosaceus (strain ATCC 25745 / CCUG 21536 / LMG 10740 / 183-1w).